Here is a 127-residue protein sequence, read N- to C-terminus: UPF0102 protein Cpha266_0037 (127 aa).

The protein belongs to the UPF0102 family.

This is UPF0102 protein Cpha266_0037 from Chlorobium phaeobacteroides (strain DSM 266 / SMG 266 / 2430).